The sequence spans 353 residues: MSQKVRIALDAMGGDFGASVVVPGAAISLTRHPDSEFLLFGDSALINKQLDLHPALQKVSRVFHTDIAVSMHDKPSQALRRGRKVSSMWLAIEAVKKGEADVAVSAGNTGALMAMARFCLRTLPGIDRPAIAAIWPTIRGDSVVLDLGATIGGDAEHLKALAVMGSAMASVLFDLERPTVGLLNIGVEEIKGGEEIRAAAELLREMNSPQFEFIGFVEGDGIGKGAADVIVSEGFSGNIALKAAEGTARQISEYLKAAMSRTWRSKIGYLFAREAFRSLRDKMDPNKSNGGVFLGLNGVVVKSHGGTSADGFAYAVDVGYDMVRYDLLNKINQTLNRGGGALGGTPTAREAVS.

The protein belongs to the PlsX family. Homodimer. Probably interacts with PlsY.

Its subcellular location is the cytoplasm. It carries out the reaction a fatty acyl-[ACP] + phosphate = an acyl phosphate + holo-[ACP]. The protein operates within lipid metabolism; phospholipid metabolism. Catalyzes the reversible formation of acyl-phosphate (acyl-PO(4)) from acyl-[acyl-carrier-protein] (acyl-ACP). This enzyme utilizes acyl-ACP as fatty acyl donor, but not acyl-CoA. The polypeptide is Phosphate acyltransferase (Rhodopseudomonas palustris (strain BisB18)).